Here is a 175-residue protein sequence, read N- to C-terminus: Methylated-DNA--protein-cysteine methyltransferase (175 aa).

The active-site Nucleophile; methyl group acceptor is the C142.

It belongs to the MGMT family.

Its subcellular location is the cytoplasm. The catalysed reaction is a 6-O-methyl-2'-deoxyguanosine in DNA + L-cysteinyl-[protein] = S-methyl-L-cysteinyl-[protein] + a 2'-deoxyguanosine in DNA. The enzyme catalyses a 4-O-methyl-thymidine in DNA + L-cysteinyl-[protein] = a thymidine in DNA + S-methyl-L-cysteinyl-[protein]. In terms of biological role, involved in the cellular defense against the biological effects of O6-methylguanine (O6-MeG) and O4-methylthymine (O4-MeT) in DNA. Repairs the methylated nucleobase in DNA by stoichiometrically transferring the methyl group to a cysteine residue in the enzyme. This is a suicide reaction: the enzyme is irreversibly inactivated. This is Methylated-DNA--protein-cysteine methyltransferase from Thermococcus sibiricus (strain DSM 12597 / MM 739).